A 237-amino-acid chain; its full sequence is Ribonuclease PH (237 aa).

Phosphate contacts are provided by residues arginine 86 and 124–126 (GTR).

The protein belongs to the RNase PH family. In terms of assembly, homohexameric ring arranged as a trimer of dimers.

The enzyme catalyses tRNA(n+1) + phosphate = tRNA(n) + a ribonucleoside 5'-diphosphate. In terms of biological role, phosphorolytic 3'-5' exoribonuclease that plays an important role in tRNA 3'-end maturation. Removes nucleotide residues following the 3'-CCA terminus of tRNAs; can also add nucleotides to the ends of RNA molecules by using nucleoside diphosphates as substrates, but this may not be physiologically important. Probably plays a role in initiation of 16S rRNA degradation (leading to ribosome degradation) during starvation. The protein is Ribonuclease PH of Shewanella denitrificans (strain OS217 / ATCC BAA-1090 / DSM 15013).